A 175-amino-acid chain; its full sequence is uncharacterized protein (175 aa).

A helical transmembrane segment spans residues 143–166 (TCFLFCAFVTSIFIETDYSIFFLL).

It localises to the membrane. This is an uncharacterized protein from Saccharomyces cerevisiae (strain ATCC 204508 / S288c) (Baker's yeast).